The sequence spans 143 residues: Large ribosomal subunit protein uL11 (143 aa).

The protein belongs to the universal ribosomal protein uL11 family. In terms of assembly, part of the ribosomal stalk of the 50S ribosomal subunit. Interacts with L10 and the large rRNA to form the base of the stalk. L10 forms an elongated spine to which L12 dimers bind in a sequential fashion forming a multimeric L10(L12)X complex. In terms of processing, one or more lysine residues are methylated.

Its function is as follows. Forms part of the ribosomal stalk which helps the ribosome interact with GTP-bound translation factors. This Alkalilimnicola ehrlichii (strain ATCC BAA-1101 / DSM 17681 / MLHE-1) protein is Large ribosomal subunit protein uL11.